The following is a 210-amino-acid chain: MASSSALALRRLLSSSTVAVPRALRAVRPVAASSRLFNTNAARNYEDGVDRNHHSNRHVSRHGGDFFSHILDPFTPTRSLSQMLNFMDQVSEIPLVSATRGMGASGVRRGWNVKEKDDALHLRIDMPGLSREDVKLALEQNTLVIRGEGETEEGEDVSGDGRRFTSRIELPEKVYKTDEIKAEMKNGVLKVVIPKIKEDERNNIRHINVD.

Residues 1–20 constitute a mitochondrion transit peptide; it reads MASSSALALRRLLSSSTVAV. The sHSP domain maps to 102 to 210; it reads MGASGVRRGW…RNNIRHINVD (109 aa).

Belongs to the small heat shock protein (HSP20) family. In terms of assembly, may form oligomeric structures.

It localises to the mitochondrion. The polypeptide is 23.5 kDa heat shock protein, mitochondrial (HSP23.5) (Arabidopsis thaliana (Mouse-ear cress)).